A 368-amino-acid polypeptide reads, in one-letter code: ICEBs1 integrase (368 aa).

The 83-residue stretch at 61–143 (VSFPTLISIY…SLSKIFDTAV (83 aa)) folds into the Core-binding (CB) domain. The 199-residue stretch at 164–362 (KKMKFWRPEE…YPNKQKEMAD (199 aa)) folds into the Tyr recombinase domain. Active-site residues include Arg-201, Lys-239, His-313, Arg-316, and His-339. Tyr-349 functions as the O-(3'-phospho-DNA)-tyrosine intermediate in the catalytic mechanism.

Belongs to the 'phage' integrase family.

Putative integrase that is involved in the insertion of the integrative and conjugative element ICEBs1. Required for the excision of ICEBs1 from the donor cell genome and subsequent integration in the recipient cell genome. Appears not to be transferred through the mating pore. Integration of ICEBs1 involves an attachment site in the chromosome, attB, and a site in the circular form of ICEBs1, attICEBs1. This is ICEBs1 integrase (int) from Bacillus subtilis (strain 168).